The following is a 71-amino-acid chain: Large ribosomal subunit protein bL31 (71 aa).

Positions 16, 18, 36, and 39 each coordinate Zn(2+).

Belongs to the bacterial ribosomal protein bL31 family. Type A subfamily. Part of the 50S ribosomal subunit. Zn(2+) is required as a cofactor.

Its function is as follows. Binds the 23S rRNA. This chain is Large ribosomal subunit protein bL31, found in Thermotoga sp. (strain RQ2).